The primary structure comprises 253 residues: Probable transcriptional regulatory protein Mmar10_2433 (253 aa).

Belongs to the TACO1 family.

It is found in the cytoplasm. The sequence is that of Probable transcriptional regulatory protein Mmar10_2433 from Maricaulis maris (strain MCS10) (Caulobacter maris).